Reading from the N-terminus, the 305-residue chain is Alpha-N-acetylgalactosaminide alpha-2,6-sialyltransferase 3 (305 aa).

At 1 to 8 (MACILKRK) the chain is on the cytoplasmic side. Residues 9–29 (PALAVSFIALCILLLAMRLAN) form a helical; Signal-anchor for type II membrane protein membrane-spanning segment. Residues 30 to 305 (DVTFPLLLNC…VFTHPNWTVS (276 aa)) lie on the Lumenal side of the membrane. A disulfide bond links Cys-80 and Cys-229. Asn-239 and Asn-301 each carry an N-linked (GlcNAc...) asparagine glycan.

It belongs to the glycosyltransferase 29 family. As to expression, in adults it is highly expressed in spleen, followed by kidney and lesser in lung. Not found in liver and skeletal muscle. In newborns it is abundantly expressed in brain and kidney.

It is found in the golgi apparatus membrane. It catalyses the reaction an alpha-Neu5Ac-(2-&gt;3)-beta-D-Gal-(1-&gt;3)-D-GlcNAc derivative + CMP-N-acetyl-beta-neuraminate = an alpha-Neu5Ac-(2-&gt;3)-beta-D-Gal-(1-&gt;3)-[alpha-Neu5Ac-(2-&gt;6)]-D-GlcNAc derivative + CMP + H(+). It carries out the reaction a ganglioside GM1b + CMP-N-acetyl-beta-neuraminate = a ganglioside GD1alpha + CMP + H(+). The catalysed reaction is a ganglioside GM1b (d18:1(4E)) + CMP-N-acetyl-beta-neuraminate = a ganglioside GD1alpha (d18:1(4E)) + CMP + H(+). The enzyme catalyses a globoside MSGG + CMP-N-acetyl-beta-neuraminate = a globoside DSGG + CMP + H(+). It catalyses the reaction 3-O-[alpha-Neu5Ac-(2-&gt;3)-beta-D-Gal-(1-&gt;3)-alpha-D-GalNAc]-L-Ser-[protein] + CMP-N-acetyl-beta-neuraminate = a 3-O-{alpha-Neu5Ac-(2-&gt;3)-beta-D-Gal-(1-&gt;3)-[alpha-Neu5Ac-(2-&gt;6)]-alpha-D-GalNAc}-L-seryl-[protein] + CMP + H(+). It carries out the reaction 3-O-[alpha-Neu5Ac-(2-&gt;3)-beta-D-Gal-(1-&gt;3)-alpha-D-GalNAc]-L-Thr-[protein] + CMP-N-acetyl-beta-neuraminate = a 3-O-{alpha-Neu5Ac-(2-&gt;3)-beta-D-Gal-(1-&gt;3)-[alpha-Neu5Ac-(2-&gt;6)]-alpha-D-GalNAc}-L-threonyl-[protein] + CMP + H(+). It functions in the pathway protein modification; protein glycosylation. The protein operates within glycolipid biosynthesis. Functionally, transfers the sialyl group (N-acetyl-alpha-neuraminyl or NeuAc) from CMP-NeuAc to the GalNAc residue on the NeuAc-alpha-2,3-Gal-beta-1,3-GalNAc sequence of glycoproteins and glycolipids forming an alpha-2,6-linkage. Produces branched type disialyl structures by transfer of a sialyl group onto a GalNAc residue inside the backbone core chains. ST6GalNAcIII prefers glycolipids to glycoproteins, predominantly catalyzing the biosynthesis of ganglioside GD1alpha from GM1b. GD1alpha is a critical molecule in the communication and interaction between neuronal cells and their supportive cells, particularly in brain tissues, and functions as an adhesion molecule in the process of metastasis. Sialylation of glycoproteins or glycosphingolipids is very important in tumor development, neuronal development, nerve repair, immunological processes and regulation of hormone sensitivity. The protein is Alpha-N-acetylgalactosaminide alpha-2,6-sialyltransferase 3 (St6galnac3) of Rattus norvegicus (Rat).